The chain runs to 360 residues: MKPSIVAKLEALHERHEEVQALLGDAQTIADQERFRALSREYAQLSDVSRCFTDWQQVQEDIETAQMMLDDPEMREMAQDELREAKEKSEQLEQQLHVLLLPKDPDDERNAFLEVRAGTGGDEAALFAGDLFRMYSRYAEARRWRVEIMSASEGEHGGYKEIIAKISGDGVYGRLKFESGGHRVQRVPATESQGRIHTSACTVAVMPELPDAELPDINPADLRIDTFRSSGAGGQHVNTTDSAIRITHLPTGIVVECQDERSQHKNKAKALSVLGARIHAAEMAKRQQAEASTRRNLLGSGDRSDRNRTYNFPQGRVTDHRINLTLYRLDEVMEGKLDMLIEPIIQEHQADQLAALSEQE.

Gln235 is modified (N5-methylglutamine). The tract at residues 284–313 (AKRQQAEASTRRNLLGSGDRSDRNRTYNFP) is disordered.

This sequence belongs to the prokaryotic/mitochondrial release factor family. Methylated by PrmC. Methylation increases the termination efficiency of RF1.

Its subcellular location is the cytoplasm. In terms of biological role, peptide chain release factor 1 directs the termination of translation in response to the peptide chain termination codons UAG and UAA. The chain is Peptide chain release factor 1 from Escherichia coli O127:H6 (strain E2348/69 / EPEC).